The following is a 175-amino-acid chain: Peptidyl-prolyl cis-trans isomerase B (175 aa).

The 170-residue stretch at 3-172 folds into the PPIase cyclophilin-type domain; sequence EQLYATLKTN…EDVVIESVVV (170 aa).

It belongs to the cyclophilin-type PPIase family.

Its subcellular location is the cytoplasm. It carries out the reaction [protein]-peptidylproline (omega=180) = [protein]-peptidylproline (omega=0). Inhibited by cyclosporin A (CsA). Its function is as follows. PPIases accelerate the folding of proteins. It catalyzes the cis-trans isomerization of proline imidic peptide bonds in oligopeptides. The polypeptide is Peptidyl-prolyl cis-trans isomerase B (cypB) (Streptomyces anulatus (Streptomyces chrysomallus)).